The following is a 434-amino-acid chain: Glutamate-1-semialdehyde 2,1-aminomutase 2 (434 aa).

An N6-(pyridoxal phosphate)lysine modification is found at Lys-269.

This sequence belongs to the class-III pyridoxal-phosphate-dependent aminotransferase family. HemL subfamily. Homodimer. The cofactor is pyridoxal 5'-phosphate.

It localises to the cytoplasm. It carries out the reaction (S)-4-amino-5-oxopentanoate = 5-aminolevulinate. It participates in porphyrin-containing compound metabolism; protoporphyrin-IX biosynthesis; 5-aminolevulinate from L-glutamyl-tRNA(Glu): step 2/2. The sequence is that of Glutamate-1-semialdehyde 2,1-aminomutase 2 from Exiguobacterium sp. (strain ATCC BAA-1283 / AT1b).